Consider the following 107-residue polypeptide: Large ribosomal subunit protein uL24 (107 aa).

Belongs to the universal ribosomal protein uL24 family. Part of the 50S ribosomal subunit.

Its function is as follows. One of two assembly initiator proteins, it binds directly to the 5'-end of the 23S rRNA, where it nucleates assembly of the 50S subunit. One of the proteins that surrounds the polypeptide exit tunnel on the outside of the subunit. The sequence is that of Large ribosomal subunit protein uL24 from Carboxydothermus hydrogenoformans (strain ATCC BAA-161 / DSM 6008 / Z-2901).